The chain runs to 447 residues: Glutamyl-tRNA reductase (447 aa).

Residues 45-48, serine 111, 116-118, and glutamine 122 each bind substrate; these read TCNR and ETE. Residue cysteine 46 is the Nucleophile of the active site. 191 to 196 contacts NADP(+); the sequence is GTGKYA.

Belongs to the glutamyl-tRNA reductase family. Homodimer.

The enzyme catalyses (S)-4-amino-5-oxopentanoate + tRNA(Glu) + NADP(+) = L-glutamyl-tRNA(Glu) + NADPH + H(+). The protein operates within porphyrin-containing compound metabolism; protoporphyrin-IX biosynthesis; 5-aminolevulinate from L-glutamyl-tRNA(Glu): step 1/2. Catalyzes the NADPH-dependent reduction of glutamyl-tRNA(Glu) to glutamate 1-semialdehyde (GSA). In Tropheryma whipplei (strain Twist) (Whipple's bacillus), this protein is Glutamyl-tRNA reductase.